Reading from the N-terminus, the 161-residue chain is Nucleotide-binding protein Ssed_3443 (161 aa).

The protein belongs to the YajQ family.

Functionally, nucleotide-binding protein. The polypeptide is Nucleotide-binding protein Ssed_3443 (Shewanella sediminis (strain HAW-EB3)).